We begin with the raw amino-acid sequence, 196 residues long: ATP-dependent Clp protease proteolytic subunit (196 aa).

The active-site Nucleophile is the Ser-101. The active site involves His-126.

The protein belongs to the peptidase S14 family. Component of the chloroplastic Clp protease core complex.

Its subcellular location is the plastid. The protein resides in the chloroplast stroma. The catalysed reaction is Hydrolysis of proteins to small peptides in the presence of ATP and magnesium. alpha-casein is the usual test substrate. In the absence of ATP, only oligopeptides shorter than five residues are hydrolyzed (such as succinyl-Leu-Tyr-|-NHMec, and Leu-Tyr-Leu-|-Tyr-Trp, in which cleavage of the -Tyr-|-Leu- and -Tyr-|-Trp bonds also occurs).. Cleaves peptides in various proteins in a process that requires ATP hydrolysis. Has a chymotrypsin-like activity. Plays a major role in the degradation of misfolded proteins. In Morus indica (Mulberry), this protein is ATP-dependent Clp protease proteolytic subunit.